The sequence spans 310 residues: 2-dehydropantoate 2-reductase (310 aa).

NADP(+) is bound by residues 9-14 and Asn100; that span reads GVGAIG. Residue Asn100 coordinates substrate. The active-site Proton donor is the Lys184. Asn188, Asn192, and Ser259 together coordinate substrate. Glu270 provides a ligand contact to NADP(+).

Belongs to the ketopantoate reductase family.

The protein localises to the cytoplasm. The catalysed reaction is (R)-pantoate + NADP(+) = 2-dehydropantoate + NADPH + H(+). It participates in cofactor biosynthesis; (R)-pantothenate biosynthesis; (R)-pantoate from 3-methyl-2-oxobutanoate: step 2/2. Catalyzes the NADPH-dependent reduction of ketopantoate into pantoic acid. In Aquifex aeolicus (strain VF5), this protein is 2-dehydropantoate 2-reductase.